A 157-amino-acid polypeptide reads, in one-letter code: Ribosome maturation factor RimM (157 aa).

In terms of domain architecture, PRC barrel spans 89 to 156 (PGEYYHVDLI…DRLLIDPEFV (68 aa)).

The protein belongs to the RimM family. In terms of assembly, binds ribosomal protein uS19.

It is found in the cytoplasm. An accessory protein needed during the final step in the assembly of 30S ribosomal subunit, possibly for assembly of the head region. Essential for efficient processing of 16S rRNA. May be needed both before and after RbfA during the maturation of 16S rRNA. It has affinity for free ribosomal 30S subunits but not for 70S ribosomes. This Rhizorhabdus wittichii (strain DSM 6014 / CCUG 31198 / JCM 15750 / NBRC 105917 / EY 4224 / RW1) (Sphingomonas wittichii) protein is Ribosome maturation factor RimM.